The chain runs to 261 residues: SURF1-like protein (261 aa).

The next 2 membrane-spanning stretches (helical) occupy residues 17-37 (LYWA…WQIF) and 223-243 (LSYI…WVFL).

Belongs to the SURF1 family.

The protein resides in the mitochondrion inner membrane. In terms of biological role, probably involved in the biogenesis of the COX complex. The sequence is that of SURF1-like protein from Monosiga brevicollis (Choanoflagellate).